Here is a 132-residue protein sequence, read N- to C-terminus: SH2 domain-containing protein 1B2 (132 aa).

An SH2 domain is found at 5–101 (YYHGCLTKRE…GMVVHLSNPI (97 aa)).

In terms of assembly, interacts with SLAMF1 (phosphorylated). Interacts with CD244. Interacts with Src kinases HCK, LYN, FYN, FGR and LCK (via kinase domains). In terms of tissue distribution, expressed in spleen. Expressed in macrophages, CD8(+) T-Cells and NK cells. Conflictingly found only in NK cells.

The protein resides in the cytoplasm. Its function is as follows. Cytoplasmic adapter regulating receptors of the signaling lymphocytic activation molecule (SLAM) family. In SLAM signaling may cooperate with Sh2d1a/SAP. Plays a role in regulation of effector functions of natural killer (NK) cells by controlling signal transduction through Cd244/2b4. However, conflicting results are reported which may reflect the use of different strain backgrounds. Proposed to act as an inhibitor of Cd244-mediated NK cell function including cytotoxicity and IFN-gamma production, the latter found also by triggering Klra4 and Klrk1 next to Cd244. Seems to positively regulate Cd244- and Cd84-dependent NK cell functions implicating Cd244-mediated phosphorylation of Vav1. The sequence is that of SH2 domain-containing protein 1B2 (Sh2d1b2) from Mus musculus (Mouse).